The chain runs to 64 residues: Large ribosomal subunit protein bL35 (64 aa).

The interval 1 to 44 (MPKLKTNRGAAKRFKVKASGRISRARSNHSHILTKKDPKRKRRL) is disordered. Residues 10-44 (AAKRFKVKASGRISRARSNHSHILTKKDPKRKRRL) are compositionally biased toward basic residues.

Belongs to the bacterial ribosomal protein bL35 family.

The polypeptide is Large ribosomal subunit protein bL35 (Halorhodospira halophila (strain DSM 244 / SL1) (Ectothiorhodospira halophila (strain DSM 244 / SL1))).